A 157-amino-acid chain; its full sequence is Small heat shock protein ibp (157 aa).

In terms of domain architecture, sHSP spans 35–148 (EKPISDTPTY…KPKKISINVP (114 aa)).

This sequence belongs to the small heat shock protein (HSP20) family.

This chain is Small heat shock protein ibp (ibp), found in Buchnera aphidicola subsp. Acyrthosiphon pisum (strain APS) (Acyrthosiphon pisum symbiotic bacterium).